A 462-amino-acid chain; its full sequence is Cysteine--tRNA ligase (462 aa).

C24 contributes to the Zn(2+) binding site. The 'HIGH' region signature appears at 26–36; it reads PTVYDDAHLGH. Zn(2+)-binding residues include C199, H224, and E228. Residues 256 to 260 carry the 'KMSKS' region motif; the sequence is KMSKS. K259 contacts ATP.

Belongs to the class-I aminoacyl-tRNA synthetase family. As to quaternary structure, monomer. Requires Zn(2+) as cofactor.

It is found in the cytoplasm. The catalysed reaction is tRNA(Cys) + L-cysteine + ATP = L-cysteinyl-tRNA(Cys) + AMP + diphosphate. The chain is Cysteine--tRNA ligase (cysS) from Campylobacter jejuni subsp. jejuni serotype O:2 (strain ATCC 700819 / NCTC 11168).